A 228-amino-acid chain; its full sequence is F-box protein At5g67140 (228 aa).

One can recognise an F-box domain in the interval 4–51 (EAAIDRLPLDLLAYIFSLATSFTVLAQASGVCKKWRKAVNQSMARRET).

This Arabidopsis thaliana (Mouse-ear cress) protein is F-box protein At5g67140.